A 427-amino-acid chain; its full sequence is Serine--tRNA ligase (427 aa).

Thr231–Glu233 contributes to the L-serine binding site. An ATP-binding site is contributed by Arg262–Glu264. Glu285 contacts L-serine. ATP is bound at residue Glu349 to Ser352. Ser385 provides a ligand contact to L-serine.

It belongs to the class-II aminoacyl-tRNA synthetase family. Type-1 seryl-tRNA synthetase subfamily. Homodimer. The tRNA molecule binds across the dimer.

The protein localises to the cytoplasm. The enzyme catalyses tRNA(Ser) + L-serine + ATP = L-seryl-tRNA(Ser) + AMP + diphosphate + H(+). The catalysed reaction is tRNA(Sec) + L-serine + ATP = L-seryl-tRNA(Sec) + AMP + diphosphate + H(+). It participates in aminoacyl-tRNA biosynthesis; selenocysteinyl-tRNA(Sec) biosynthesis; L-seryl-tRNA(Sec) from L-serine and tRNA(Sec): step 1/1. Its function is as follows. Catalyzes the attachment of serine to tRNA(Ser). Is also able to aminoacylate tRNA(Sec) with serine, to form the misacylated tRNA L-seryl-tRNA(Sec), which will be further converted into selenocysteinyl-tRNA(Sec). The chain is Serine--tRNA ligase from Hahella chejuensis (strain KCTC 2396).